The following is a 201-amino-acid chain: Potassium-transporting ATPase KdpC subunit (201 aa).

A helical transmembrane segment spans residues 9 to 29 (ILVMLALTLITGLLYPLAMTV). 2 stretches are compositionally biased toward polar residues: residues 73–84 (TTAADPNDSTKT) and 91–101 (AANSSGSNLGP). Positions 73–103 (TTAADPNDSTKTVPAPYNAANSSGSNLGPTS) are disordered.

It belongs to the KdpC family. The system is composed of three essential subunits: KdpA, KdpB and KdpC.

It localises to the cell inner membrane. Part of the high-affinity ATP-driven potassium transport (or Kdp) system, which catalyzes the hydrolysis of ATP coupled with the electrogenic transport of potassium into the cytoplasm. This subunit acts as a catalytic chaperone that increases the ATP-binding affinity of the ATP-hydrolyzing subunit KdpB by the formation of a transient KdpB/KdpC/ATP ternary complex. In Bradyrhizobium sp. (strain BTAi1 / ATCC BAA-1182), this protein is Potassium-transporting ATPase KdpC subunit.